A 71-amino-acid polypeptide reads, in one-letter code: MSALKFVLICGLVLLLIETIPGVSLNLMRATNRHQCDTNDDCEEDECCVLVGGNVNNPGVQTRICLACSRK.

An N-terminal signal peptide occupies residues 1–20 (MSALKFVLICGLVLLLIETI). A propeptide spanning residues 21 to 29 (PGVSLNLMR) is cleaved from the precursor. 3 disulfides stabilise this stretch: cysteine 36–cysteine 48, cysteine 42–cysteine 65, and cysteine 47–cysteine 68.

In terms of tissue distribution, expressed by the venom duct.

The protein localises to the secreted. In terms of biological role, elicits an uncoordinated twisting syndrome when injected into C.elegans, but has no effect on mice. In Terebra subulata (Chocolate spotted auger), this protein is Augerpeptide-s7a.